Here is a 623-residue protein sequence, read N- to C-terminus: Activator of C kinase protein 1 (623 aa).

Positions 141 to 230 are disordered; it reads KESLGSPAVQ…GSSGGEDKLS (90 aa). Residues 152-161 show a composition bias toward polar residues; sequence ASISSGNRIS. Residues 176–193 are compositionally biased toward basic and acidic residues; the sequence is SESRILQEKVYRTEEKAP. Residues lysine 184 and lysine 191 each participate in a glycyl lysine isopeptide (Lys-Gly) (interchain with G-Cter in ubiquitin) cross-link. Positions 206-215 are enriched in polar residues; it reads KINQPPTGSA. 4 Sel1-like repeats span residues 318–361, 408–444, 495–531, and 576–611; these read PPAM…KLNN, SACM…QKGD, PLAQ…AAQP, and ARTE…RMGF.

The chain is Activator of C kinase protein 1 (ACK1) from Saccharomyces cerevisiae (strain ATCC 204508 / S288c) (Baker's yeast).